Here is an 81-residue protein sequence, read N- to C-terminus: Photosystem I iron-sulfur center (81 aa).

4Fe-4S ferredoxin-type domains lie at 2 to 31 (SHTV…MVPW) and 37 to 68 (GQIA…VRVY). 8 residues coordinate [4Fe-4S] cluster: cysteine 11, cysteine 14, cysteine 17, cysteine 21, cysteine 48, cysteine 51, cysteine 54, and cysteine 58.

As to quaternary structure, the eukaryotic PSI reaction center is composed of at least 11 subunits. The cofactor is [4Fe-4S] cluster.

It localises to the plastid. Its subcellular location is the chloroplast thylakoid membrane. The catalysed reaction is reduced [plastocyanin] + hnu + oxidized [2Fe-2S]-[ferredoxin] = oxidized [plastocyanin] + reduced [2Fe-2S]-[ferredoxin]. Functionally, apoprotein for the two 4Fe-4S centers FA and FB of photosystem I (PSI); essential for photochemical activity. FB is the terminal electron acceptor of PSI, donating electrons to ferredoxin. The C-terminus interacts with PsaA/B/D and helps assemble the protein into the PSI complex. Required for binding of PsaD and PsaE to PSI. PSI is a plastocyanin/cytochrome c6-ferredoxin oxidoreductase, converting photonic excitation into a charge separation, which transfers an electron from the donor P700 chlorophyll pair to the spectroscopically characterized acceptors A0, A1, FX, FA and FB in turn. This is Photosystem I iron-sulfur center from Phaeodactylum tricornutum (strain CCAP 1055/1).